Consider the following 102-residue polypeptide: Aspartyl/glutamyl-tRNA(Asn/Gln) amidotransferase subunit C (102 aa).

The protein belongs to the GatC family. As to quaternary structure, heterotrimer of A, B and C subunits.

The enzyme catalyses L-glutamyl-tRNA(Gln) + L-glutamine + ATP + H2O = L-glutaminyl-tRNA(Gln) + L-glutamate + ADP + phosphate + H(+). It carries out the reaction L-aspartyl-tRNA(Asn) + L-glutamine + ATP + H2O = L-asparaginyl-tRNA(Asn) + L-glutamate + ADP + phosphate + 2 H(+). Functionally, allows the formation of correctly charged Asn-tRNA(Asn) or Gln-tRNA(Gln) through the transamidation of misacylated Asp-tRNA(Asn) or Glu-tRNA(Gln) in organisms which lack either or both of asparaginyl-tRNA or glutaminyl-tRNA synthetases. The reaction takes place in the presence of glutamine and ATP through an activated phospho-Asp-tRNA(Asn) or phospho-Glu-tRNA(Gln). In Bordetella bronchiseptica (strain ATCC BAA-588 / NCTC 13252 / RB50) (Alcaligenes bronchisepticus), this protein is Aspartyl/glutamyl-tRNA(Asn/Gln) amidotransferase subunit C.